A 512-amino-acid chain; its full sequence is MDASLLLSVALAVVLIPLSLALLNRLRLGRLPPGPRPWPVLGNLRQIKPIRCRCFQEWAERYGPVISVWFGSGLTVVVSTSELAKEVLKENDQQLADRPRNRSTQRFSRNGQDLIWADYGPHYIKVRKLCNLELFTPKRLEALRPIREDEVTAMVESVYRAATAPGNEGKPMVVRNHLSMVAFNNITRLAFGKRFMNANGDIDEQGREFKTIVNNGIKIGASLSVAEFIWYLRWLCPLNEELYKTHNERRDRLTMKIIEEHAKSLKESGAKQHFVDALFTLKQQYDLSEDTVIGLLWDMITAGMDTTVISVEWAMAELVRNPRVQKKLQEELDRVVGRDRVMLETDFQNLPYLQAVVKESLRLHPPTPLMLPHKASTNVKIGGYDIPKGANVMVNVWAVARDPKVWSNPLEYRPERFLEENIDIKGSDFRVLPFGAGRRVCPGAQLGINLVASMIGHLLHHFEWSLPEGTRPEDVNMMESPGLVTFMGTPLQAVAKPRLEKEELYNRVPVEM.

The helical transmembrane segment at 3 to 23 (ASLLLSVALAVVLIPLSLALL) threads the bilayer. Position 441 (cysteine 441) interacts with heme.

It belongs to the cytochrome P450 family. It depends on heme as a cofactor.

The protein localises to the membrane. This chain is Cytochrome P450 98A1 (CYP98A1), found in Sorghum bicolor (Sorghum).